A 94-amino-acid polypeptide reads, in one-letter code: Large ribosomal subunit protein uL23 (94 aa).

This sequence belongs to the universal ribosomal protein uL23 family. In terms of assembly, part of the 50S ribosomal subunit. Contacts protein L29, and trigger factor when it is bound to the ribosome.

Functionally, one of the early assembly proteins it binds 23S rRNA. One of the proteins that surrounds the polypeptide exit tunnel on the outside of the ribosome. Forms the main docking site for trigger factor binding to the ribosome. The chain is Large ribosomal subunit protein uL23 from Geobacter sp. (strain M21).